The primary structure comprises 388 residues: Glucose-6-phosphate/phosphate translocator 2, chloroplastic (388 aa).

The transit peptide at 1-68 (MLSSIKPSSS…SASNFKREVK (68 aa)) directs the protein to the chloroplast. 8 helical membrane passes run 95-115 (LKIGIYFATWWALNVVFNIYN), 122-142 (FPYPWLTSTLSLACGSLMMLV), 158-178 (FWKTLFPVAVAHTIGHVAATV), 211-231 (FPLPVYLSLLPIIGGCALAAI), 233-253 (ELNFNITGFMGAMISNLAFVF), 281-301 (LVILTPFSIAVEGPQMWAAGW), 305-325 (VSQVGPNFVWWVVAQSVFYHL), and 358-378 (IIIFHTPIQPVNALGAAIAIF). Residues 113–231 (IYNKKVLNAF…IIGGCALAAI (119 aa)) form the EamA domain.

The protein belongs to the TPT transporter family. GPT (TC 2.A.7.9) subfamily. Expressed in seeds, flowers, stamens, and rosette leaves, with highest levels found in sepals and senescing leaves.

It is found in the plastid. The protein resides in the chloroplast membrane. Its function is as follows. Glucose 6-phosphate (Glc6P) transporter. Also transports inorganic phosphate, 3-phosphoglycerate, triose phosphates and, to a leser extent, phosphoenolpyruvate. Responsible for the transport of Glc6P into plastids of heterotrophic tissues where it can be used as a carbon source for starch biosynthesis, as substrate for fatty acid biosynthesis or as substrate for NADPH generation via the oxidative pentose phosphate pathway (OPPP). Required for dynamic acclimation of photosynthesis and partitioning of Glc6P between the chloroplast and the cytosol. May modulate the sensing of sugar status during early seedling development. The sequence is that of Glucose-6-phosphate/phosphate translocator 2, chloroplastic from Arabidopsis thaliana (Mouse-ear cress).